Consider the following 739-residue polypeptide: MATGSYFPPPGAPSSISPRNSTPALSPLSPPLQQRSNALSNRLTSVLSVSYADSDIRDALETLSLRGVHNTAEVRRQLRLDVQKEVVDCNAEIVRDFGNVAEQLKRIGSVISSLKETCDEMRKHIVLAKQDTTPVLEEASALMIQKQEAETKQRLLDAFTKHFIVSEEELLALTSIEEPIDDEFFDVLARVKQVHRDCEALLGAEHERLGLELMEKSSRSLNSAYQKLYRWIQKEFKSLNLEDPQISGTIRQALRVLAERPSLFQTCLDFFAEARDYVLSDAFHYALTDAVSGGDSAVKPIEFSAHDPLRYIGDMLAWVHSTTVSEREALETLFVAEGDELAKGIQAGLNSEPWSRIDEDEEMTFDGQKALSDLVSRDLIGVARSLRQRVELVIQGHDDPVTCYKVINLLSFYQTIFSKLVGPNSNLAELLKALEKFTLNHFQTIMRDEVNNISTDHSALAPPDDLSAPQFLHDSLEVLTALMKTHEASLGTEDPSITSESEENEFTPVLHAALDPFFTLAKASADELPDPTARAIYLTNVHITTRSTISPYPFATSTHLPPLSATLSTLRVELLESQHRYLLDTSGLQVLLTALQPFSQSNESGTEKDLAAIADLPAFQAEALISTSQQLDDFLPSALMDATDNLKRVQSATFVKSVTEEAVEAFCRDFEFVEGMIIGADEARGVGQSDGAVNEEGEEGDGDGDGEVELELEVEQRGQGQSLRKLFPRTTGEIRVLLS.

2 disordered regions span residues 1 to 35 and 686 to 706; these read MATG…LQQR and VGQS…DGDG. Over residues 693–706 the composition is skewed to acidic residues; it reads VNEEGEEGDGDGDG.

This sequence belongs to the COG6 family.

It localises to the golgi apparatus membrane. Its function is as follows. Acts as a component of the peripheral membrane COG complex that is involved in intra-Golgi protein trafficking. COG is located at the cis-Golgi, and regulates tethering of retrograde intra-Golgi vesicles and possibly a number of other membrane trafficking events. In Emericella nidulans (strain FGSC A4 / ATCC 38163 / CBS 112.46 / NRRL 194 / M139) (Aspergillus nidulans), this protein is Conserved oligomeric Golgi complex subunit 6 (cog6).